The primary structure comprises 179 residues: Large ribosomal subunit protein uL5 (179 aa).

The protein belongs to the universal ribosomal protein uL5 family. Part of the 50S ribosomal subunit; part of the 5S rRNA/L5/L18/L25 subcomplex. Contacts the 5S rRNA and the P site tRNA. Forms a bridge to the 30S subunit in the 70S ribosome.

Functionally, this is one of the proteins that bind and probably mediate the attachment of the 5S RNA into the large ribosomal subunit, where it forms part of the central protuberance. In the 70S ribosome it contacts protein S13 of the 30S subunit (bridge B1b), connecting the 2 subunits; this bridge is implicated in subunit movement. Contacts the P site tRNA; the 5S rRNA and some of its associated proteins might help stabilize positioning of ribosome-bound tRNAs. This Anoxybacillus flavithermus (strain DSM 21510 / WK1) protein is Large ribosomal subunit protein uL5.